We begin with the raw amino-acid sequence, 526 residues long: MSGNKVEVDKRRTFAIISHPDAGKTTITEKVLLFGNALQKAGTVKGKKSGQHAKSDWMEMEKDRGISITTSVMQFPYGGALVNLLDTPGHEDFSEDTYRTLTAVDSCLMVIDSAKGVEDRTIKLMEVTRLRDTPIVTFMNKLDRDIRDPIDLMDEVENVLNIACAPITWPIGSGKEFKGVYHILRDEVVLYQSGMGHTIQERRVIEGINNPDLDKAIGSYAADLRDEMELVRGASNEFDHAAFLKGELTPVFFGTALGNFGVDHILDGIVEWAPKPLPRESDTRVIMPDEEKFTGFVFKIQANMDPKHRDRVAFMRVCSGRYEQGMKMHHVRIGKDVNVSDALTFMAGDRERAEEAYPGDIIGLHNHGTIRIGDTFTQGEKFRFTGVPNFAPEMFRRIRLRDPLKQKQLLKGLVQLSEEGAVQVFRPLDTNDLIVGAVGVLQFEVVVGRLKSEYNVEAIYEGISVSTARWVYCKDERKLEEFRRKCSQNLALDGGDNLTYIAPTMVNLNLSMERYPDIEFAKTREH.

Residues 9–277 enclose the tr-type G domain; the sequence is DKRRTFAIIS…GIVEWAPKPL (269 aa). GTP-binding positions include 18–25, 86–90, and 140–143; these read SHPDAGKT, DTPGH, and NKLD.

Belongs to the TRAFAC class translation factor GTPase superfamily. Classic translation factor GTPase family. PrfC subfamily.

The protein localises to the cytoplasm. Increases the formation of ribosomal termination complexes and stimulates activities of RF-1 and RF-2. It binds guanine nucleotides and has strong preference for UGA stop codons. It may interact directly with the ribosome. The stimulation of RF-1 and RF-2 is significantly reduced by GTP and GDP, but not by GMP. The polypeptide is Peptide chain release factor 3 (Shewanella putrefaciens (strain CN-32 / ATCC BAA-453)).